The chain runs to 85 residues: Probable oxaloacetate decarboxylase gamma chain (85 aa).

The chain crosses the membrane as a helical span at residues 11–33 (AATLMVTGMAVVFIFLTILVYLV).

This sequence belongs to the OadG family. In terms of assembly, heterotrimer of an alpha, a beta and a gamma subunit. The cofactor is Na(+).

The protein resides in the cell membrane. It catalyses the reaction oxaloacetate + 2 Na(+)(in) + H(+) = pyruvate + 2 Na(+)(out) + CO2. In terms of biological role, catalyzes the decarboxylation of oxaloacetate coupled to Na(+) translocation. In Vibrio parahaemolyticus serotype O3:K6 (strain RIMD 2210633), this protein is Probable oxaloacetate decarboxylase gamma chain.